The following is a 121-amino-acid chain: MVFVTIIIIINISYNIYNIYTINENRFTFNAFLQSKKASFTFICIYVCISGGNMPLWAYILFRTFLHPSSSSNSVLCFRRHNQDYHNRIFFAFCCHHIWSLLPHHLSIFPIRRQFYLNSRQ.

The next 3 helical transmembrane spans lie at 2–22, 42–62, and 89–109; these read VFVT…IYTI, FICI…YILF, and IFFA…LSIF.

It localises to the membrane. This is an uncharacterized protein from Saccharomyces cerevisiae (strain ATCC 204508 / S288c) (Baker's yeast).